Consider the following 181-residue polypeptide: Neuroblastoma suppressor of tumorigenicity 1 (181 aa).

The N-terminal stretch at 1–16 is a signal peptide; it reads MMLRVLVGAVLPAMLL. 5 disulfide bridges follow: Cys35–Cys85, Cys49–Cys99, Cys59–Cys118, Cys63–Cys120, and Cys82–Cys123. Positions 35-124 constitute a CTCK domain; sequence CEAKNITQIV…ILHCSCQACG (90 aa). Positions 132–181 are disordered; the sequence is LSVYVQGEDGPGSQPGTHPHPHPHPHPGGQTPEPEDPPGAPHTEEEGAED.

Belongs to the DAN family. Homodimer. In terms of tissue distribution, most abundant in normal lung and meningioma.

It is found in the secreted. Its function is as follows. Possible candidate as a tumor suppressor gene of neuroblastoma. May play an important role in preventing cells from entering the final stage (G1/S) of the transformation process. The chain is Neuroblastoma suppressor of tumorigenicity 1 (NBL1) from Homo sapiens (Human).